Consider the following 291-residue polypeptide: Bis(5'-nucleosyl)-tetraphosphatase, symmetrical (291 aa).

Belongs to the Ap4A hydrolase family.

The enzyme catalyses P(1),P(4)-bis(5'-adenosyl) tetraphosphate + H2O = 2 ADP + 2 H(+). Its function is as follows. Hydrolyzes diadenosine 5',5'''-P1,P4-tetraphosphate to yield ADP. The protein is Bis(5'-nucleosyl)-tetraphosphatase, symmetrical of Coxiella burnetii (strain Dugway 5J108-111).